Consider the following 943-residue polypeptide: Leucine--tRNA ligase (943 aa).

The short motif at 40–51 is the 'HIGH' region element; sequence PYPSGAGLHVGH. The 'KMSKS' region signature appears at 717–721; it reads KMSKS. ATP is bound at residue lysine 720.

Belongs to the class-I aminoacyl-tRNA synthetase family.

Its subcellular location is the cytoplasm. It carries out the reaction tRNA(Leu) + L-leucine + ATP = L-leucyl-tRNA(Leu) + AMP + diphosphate. The protein is Leucine--tRNA ligase of Bacteroides fragilis (strain ATCC 25285 / DSM 2151 / CCUG 4856 / JCM 11019 / LMG 10263 / NCTC 9343 / Onslow / VPI 2553 / EN-2).